Consider the following 412-residue polypeptide: Multifunctional CCA protein (412 aa).

2 residues coordinate ATP: glycine 8 and arginine 11. Positions 8 and 11 each coordinate CTP. Mg(2+) is bound by residues aspartate 21 and aspartate 23. ATP is bound by residues arginine 91, arginine 137, and arginine 140. Positions 91, 137, and 140 each coordinate CTP. Residues 226–327 (TGIHTMMVID…VTLFEKTDAL (102 aa)) enclose the HD domain.

It belongs to the tRNA nucleotidyltransferase/poly(A) polymerase family. Bacterial CCA-adding enzyme type 1 subfamily. Monomer. Can also form homodimers and oligomers. Mg(2+) serves as cofactor. Requires Ni(2+) as cofactor.

The catalysed reaction is a tRNA precursor + 2 CTP + ATP = a tRNA with a 3' CCA end + 3 diphosphate. It catalyses the reaction a tRNA with a 3' CCA end + 2 CTP + ATP = a tRNA with a 3' CCACCA end + 3 diphosphate. In terms of biological role, catalyzes the addition and repair of the essential 3'-terminal CCA sequence in tRNAs without using a nucleic acid template. Adds these three nucleotides in the order of C, C, and A to the tRNA nucleotide-73, using CTP and ATP as substrates and producing inorganic pyrophosphate. tRNA 3'-terminal CCA addition is required both for tRNA processing and repair. Also involved in tRNA surveillance by mediating tandem CCA addition to generate a CCACCA at the 3' terminus of unstable tRNAs. While stable tRNAs receive only 3'-terminal CCA, unstable tRNAs are marked with CCACCA and rapidly degraded. The chain is Multifunctional CCA protein from Dechloromonas aromatica (strain RCB).